Consider the following 643-residue polypeptide: Ecto-NOX disulfide-thiol exchanger 1 (643 aa).

The RRM domain occupies 142-221; it reads KTVFVGGLPE…GRLHVDFAQA (80 aa). 2 coiled-coil regions span residues 307–342 and 425–570; these read VQSA…LTGI and QAYA…EALL.

This sequence belongs to the ENOX family. Cu cation serves as cofactor. In terms of tissue distribution, expressed in lymphocyte cells, breast and breast cancer (at protein level). Found in the sera of cancer patients with a wide variety of cancers including breast, prostate, lung and ovarian cancers, leukemias, and lymphomas. Found also in the serum of healthy volunteers or patients with disorders other than cancer. Probably shed into serum by cancer cells.

Its subcellular location is the cell membrane. The protein localises to the secreted. The protein resides in the extracellular space. Its activity is regulated as follows. Not inhibited by the antitumor sulfonylurea LY181984, the vabilloid capsaicin, and retinoids. In terms of biological role, probably acts as a terminal oxidase of plasma electron transport from cytosolic NAD(P)H via hydroquinones to acceptors at the cell surface. Hydroquinone oxidase activity alternates with a protein disulfide-thiol interchange/oxidoreductase activity which may control physical membrane displacements associated with vesicle budding or cell enlargement. The activities oscillate with a period length of 24 minutes and play a role in control of the ultradian cellular biological clock. This chain is Ecto-NOX disulfide-thiol exchanger 1 (ENOX1), found in Homo sapiens (Human).